The following is a 196-amino-acid chain: RNA-binding protein with multiple splicing 2 (196 aa).

An RRM domain is found at arginine 20–alanine 97. Residues aspartate 30 to phenylalanine 40 form an important for homodimerization region.

In terms of assembly, homodimer. Expressed in developing heart, pronephros, retina and epiphysis. In adult, high expression in heart, moderate in kidney, undetectable in liver, lung and skeletal muscle.

It localises to the cytoplasm. It is found in the nucleus. The protein resides in the stress granule. In terms of biological role, RNA-binding protein involved in the regulation of smooth muscle cell differentiation and proliferation in the gastrointestinal system. Binds NOG mRNA, the major inhibitor of the bone morphogenetic protein (BMP) pathway. Mediates an increase of NOG mRNA levels, thereby contributing to the negative regulation of BMP signaling pathway and promoting reversible dedifferentiation and proliferation of smooth muscle cells. Acts as a pre-mRNA alternative splicing regulator. Mediates ACTN1 and FLNB alternative splicing. Likely binds to mRNA tandem CAC trinucleotide or CA dinucleotide motifs. The chain is RNA-binding protein with multiple splicing 2 from Xenopus laevis (African clawed frog).